The sequence spans 507 residues: Arylsulfatase A (507 aa).

The signal sequence occupies residues 1–18 (MEALWTLTLALAAGLAAA). The Ca(2+) site is built by Asp29, Asp30, and Cys69. Residue Cys69 is the Nucleophile of the active site. Residue Cys69 is modified to 3-oxoalanine (Cys). Lys123 provides a ligand contact to substrate. The active site involves His125. Residue Ser150 coordinates substrate. Disulfide bonds link Cys156–Cys172 and Cys161–Cys168. N-linked (GlcNAc...) asparagine glycosylation is present at Asn158. Asn184 carries N-linked (GlcNAc...) asparagine glycosylation. His229 is a substrate binding site. The Ca(2+) site is built by Asp281 and Asn282. Disulfide bonds link Cys300-Cys414, Cys488-Cys500, Cys489-Cys502, and Cys493-Cys499. Lys302 lines the substrate pocket. Asn350 is a glycosylation site (N-linked (GlcNAc...) asparagine).

The protein belongs to the sulfatase family. As to quaternary structure, homodimer at neutral pH and homooctamer at acidic pH. Exists both as a single chain of 58 kDa (component A) or as a chain of 50 kDa (component B) linked by disulfide bond(s) to a 7 kDa chain (component C). Interacts with SUMF1. The cofactor is Ca(2+). In terms of processing, the conversion to 3-oxoalanine (also known as C-formylglycine, FGly), of a serine or cysteine residue in prokaryotes and of a cysteine residue in eukaryotes, is critical for catalytic activity. This post-translational modification is severely defective in multiple sulfatase deficiency (MSD).

The protein localises to the endoplasmic reticulum. The protein resides in the lysosome. It catalyses the reaction an N-acyl-1-beta-D-(3-O-sulfo)-galactosyl-sphing-4-enine + H2O = a beta-D-galactosyl-(1&lt;-&gt;1')-N-acylsphing-4-enine + sulfate + H(+). Functionally, hydrolyzes cerebroside sulfate. The chain is Arylsulfatase A (ARSA) from Bos taurus (Bovine).